A 281-amino-acid polypeptide reads, in one-letter code: NADPH-dependent 7-cyano-7-deazaguanine reductase (281 aa).

A substrate-binding site is contributed by 88 to 90 (VES). Position 90–91 (90–91 (SK)) interacts with NADPH. C189 acts as the Thioimide intermediate in catalysis. D196 (proton donor) is an active-site residue. 228–229 (HE) serves as a coordination point for substrate. Residue 257–258 (RG) coordinates NADPH.

This sequence belongs to the GTP cyclohydrolase I family. QueF type 2 subfamily. Homodimer.

The protein resides in the cytoplasm. The enzyme catalyses 7-aminomethyl-7-carbaguanine + 2 NADP(+) = 7-cyano-7-deazaguanine + 2 NADPH + 3 H(+). The protein operates within tRNA modification; tRNA-queuosine biosynthesis. Catalyzes the NADPH-dependent reduction of 7-cyano-7-deazaguanine (preQ0) to 7-aminomethyl-7-deazaguanine (preQ1). This chain is NADPH-dependent 7-cyano-7-deazaguanine reductase, found in Cronobacter sakazakii (strain ATCC BAA-894) (Enterobacter sakazakii).